The following is a 192-amino-acid chain: NOP protein chaperone 1 (192 aa).

The span at 1–26 (MEVSGESHSGPSCSSSSRDGSGVSVS) shows a compositional bias: low complexity. Residues 1 to 39 (MEVSGESHSGPSCSSSSRDGSGVSVSKELLMAGSGGRGG) form a disordered region. A phosphoserine mark is found at Ser-34 and Ser-66. Residues 118–192 (FEMNQSHSKE…SENKEKQENK (75 aa)) are disordered. The segment covering 129–152 (DSSEENSQDSSEESSESEDEDDST) has biased composition (acidic residues). Residues 164-177 (KLPHSEDGKGKIEV) show a composition bias toward basic and acidic residues. Ser-180 is modified (phosphoserine).

As to quaternary structure, interacts with NOP58, RUVBL1 and RUVBL2; the interactions are direct and NOPCHAP1 bridges the association of NOP58 with RUVBL1:RUVBL2 even in absence of snoRNAs. The interactions with RUVBL1 and RUVBL2 are disrupted upon ATP binding.

Its subcellular location is the nucleus. In terms of biological role, client-loading PAQosome/R2TP complex cofactor that selects NOP58 to promote box C/D small nucleolar ribonucleoprotein (snoRNP) assembly. Acts as a bridge between NOP58 and the R2TP complex via RUVBL1:RUVBL2. This Bos taurus (Bovine) protein is NOP protein chaperone 1 (NOPCHAP1).